Consider the following 159-residue polypeptide: Ribosomal RNA large subunit methyltransferase H (159 aa).

S-adenosyl-L-methionine is bound by residues leucine 76, glycine 108, and 127–132 (FGLLTL).

Belongs to the RNA methyltransferase RlmH family. Homodimer.

The protein localises to the cytoplasm. It carries out the reaction pseudouridine(1915) in 23S rRNA + S-adenosyl-L-methionine = N(3)-methylpseudouridine(1915) in 23S rRNA + S-adenosyl-L-homocysteine + H(+). Its function is as follows. Specifically methylates the pseudouridine at position 1915 (m3Psi1915) in 23S rRNA. The sequence is that of Ribosomal RNA large subunit methyltransferase H from Streptococcus mutans serotype c (strain ATCC 700610 / UA159).